The chain runs to 185 residues: Ribosome-recycling factor (185 aa).

It belongs to the RRF family.

It is found in the cytoplasm. Functionally, responsible for the release of ribosomes from messenger RNA at the termination of protein biosynthesis. May increase the efficiency of translation by recycling ribosomes from one round of translation to another. The polypeptide is Ribosome-recycling factor (Campylobacter fetus subsp. fetus (strain 82-40)).